Here is a 218-residue protein sequence, read N- to C-terminus: Cytochrome b6 (218 aa).

The chain crosses the membrane as a helical span at residues 35 to 55 (IFYCLGGITLVCFLIQFATGF). C38 serves as a coordination point for heme c. Residues H89 and H103 each contribute to the heme b site. The next 3 membrane-spanning stretches (helical) occupy residues 93–113 (ASMMVLMLILHVFRVYLTGGF), 119–139 (LTWVTGVTMAVITVSFGVTGY), and 189–209 (LHTFVMPWLLAVFMLMHFLMI). The heme b site is built by H190 and H205.

Belongs to the cytochrome b family. PetB subfamily. The 4 large subunits of the cytochrome b6-f complex are cytochrome b6, subunit IV (17 kDa polypeptide, PetD), cytochrome f and the Rieske protein, while the 4 small subunits are PetG, PetL, PetM and PetN. The complex functions as a dimer. Heme b is required as a cofactor. Requires heme c as cofactor.

Its subcellular location is the cellular thylakoid membrane. Component of the cytochrome b6-f complex, which mediates electron transfer between photosystem II (PSII) and photosystem I (PSI), cyclic electron flow around PSI, and state transitions. The chain is Cytochrome b6 from Synechococcus sp. (strain CC9311).